The following is a 195-amino-acid chain: Ribonuclease HII (195 aa).

The RNase H type-2 domain occupies 6–195 (SLIAGVDEVG…KSFISRLEIN (190 aa)). 3 residues coordinate a divalent metal cation: Asp12, Glu13, and Asp108.

This sequence belongs to the RNase HII family. Requires Mn(2+) as cofactor. The cofactor is Mg(2+).

The protein resides in the cytoplasm. The enzyme catalyses Endonucleolytic cleavage to 5'-phosphomonoester.. Functionally, endonuclease that specifically degrades the RNA of RNA-DNA hybrids. This is Ribonuclease HII from Prochlorococcus marinus (strain NATL1A).